The chain runs to 438 residues: sn-glycerol-3-phosphate-binding periplasmic protein UgpB (438 aa).

The N-terminal stretch at 1–23 (MISLRHTALGLALSLAFTGQALA) is a signal peptide. Sn-glycerol 3-phosphate-binding residues include Tyr-65, Glu-89, Ser-144, Ser-270, Gly-307, Tyr-346, and Arg-397.

Belongs to the bacterial solute-binding protein 1 family. The complex is composed of two ATP-binding proteins (UgpC), two transmembrane proteins (UgpA and UgpE) and a solute-binding protein (UgpB).

The protein localises to the periplasm. Functionally, part of the ABC transporter complex UgpBAEC involved in sn-glycerol-3-phosphate (G3P) import. Binds G3P. The sequence is that of sn-glycerol-3-phosphate-binding periplasmic protein UgpB (ugpB) from Salmonella typhi.